The sequence spans 749 residues: MFKRTIPLFAAFTLAISPSIFPNYAHAQEDKPKTNQYWWPKMLDLSPLRQPNATSNPMGEKFNYAEEFNSLDLNAVIEDLKKLMTTSQDWWPADYGNYGPLFIRMSWHAAGTYRIYDGRGGANGGFQRFAPQNSWPDNANLDKARRLLWPIKQKYGRKISWADLLVLAGNVAMESMGFKTIGFAGGREDAWEAININWGTEGKWLESKRQDKVGKLEKPLAATVMGLIYVNPEGPNGVPDPLAAAEKIRETFGRMAMNDEETVALIAGGHAFGKTHGAASGKYLGPAPEAAGIEEQGFGWKNSYGSGKGKDTITSGLEGAWTVTPTHWSHNYLQNLFNFNWVKTKSPGGAIQWVPENSNASSMVPDAFDPSKRHAPVMLTTDLALKFDPVYSKIAKRFLDNPKEFDDAFARAWFKLIHRDMGPRSRYLGSLVPKEIMIWQDPVPPVDYKLVDANDIANLKGKILNSGLTTPELVKTAWASASTFRGTDMRGGANGARIRLAPQKDWPANDPQELAKVLKTLESIQNNFNNAQADGKKISLADLIVLGGNAAIEQAAKQAGYDIIVPFTPGRTDATQGMTDVKSFEVLEPKADGFRNYFDKSNNMSPPEMLVDKASLLKLSVPEMTVLVGGMRVLNANTGQNQYGVFTDKPGTLNNDFFINLLSMSTEWKKSSETEGIYEGYDRKTGKLKWKATSVDLIFGANSELRAVAEAYATDDAKDKFIQDFVNAWVKVMTADRFDIKAANANINS.

The first 27 residues, 1-27, serve as a signal peptide directing secretion; it reads MFKRTIPLFAAFTLAISPSIFPNYAHA. The tryptophyl-tyrosyl-methioninium (Trp-Tyr) (with M-255) cross-link spans 107-229; the sequence is WHAAGTYRIY…LAATVMGLIY (123 aa). His-108 serves as the catalytic Proton acceptor. Positions 229 to 255 form a cross-link, tryptophyl-tyrosyl-methioninium (Tyr-Met) (with W-107); the sequence is YVNPEGPNGVPDPLAAAEKIRETFGRM. His-270 is a heme b binding site.

This sequence belongs to the peroxidase family. Peroxidase/catalase subfamily. As to quaternary structure, homodimer or homotetramer. The cofactor is heme b. In terms of processing, formation of the three residue Trp-Tyr-Met cross-link is important for the catalase, but not the peroxidase activity of the enzyme.

The enzyme catalyses H2O2 + AH2 = A + 2 H2O. The catalysed reaction is 2 H2O2 = O2 + 2 H2O. Functionally, bifunctional enzyme with both catalase and broad-spectrum peroxidase activity. This is Catalase-peroxidase 2 from Legionella pneumophila (strain Lens).